The primary structure comprises 890 residues: Alanine--tRNA ligase (890 aa).

The Zn(2+) site is built by histidine 573, histidine 577, cysteine 675, and histidine 679.

This sequence belongs to the class-II aminoacyl-tRNA synthetase family. Zn(2+) is required as a cofactor.

It is found in the cytoplasm. It carries out the reaction tRNA(Ala) + L-alanine + ATP = L-alanyl-tRNA(Ala) + AMP + diphosphate. Catalyzes the attachment of alanine to tRNA(Ala) in a two-step reaction: alanine is first activated by ATP to form Ala-AMP and then transferred to the acceptor end of tRNA(Ala). Also edits incorrectly charged Ser-tRNA(Ala) and Gly-tRNA(Ala) via its editing domain. This Streptomyces avermitilis (strain ATCC 31267 / DSM 46492 / JCM 5070 / NBRC 14893 / NCIMB 12804 / NRRL 8165 / MA-4680) protein is Alanine--tRNA ligase.